We begin with the raw amino-acid sequence, 257 residues long: Exosome complex component mtr3 (257 aa).

Belongs to the RNase PH family. As to quaternary structure, component of the RNA exosome complex. Specifically part of the catalytically inactive RNA exosome core complex (Exo-9) may associate with the catalytic subunits rrp6 and dis3 in cytoplasmic- and nuclear-specific RNA exosome complex forms. Exo-9 is formed by a hexameric base ring of RNase PH domain-containing subunits and a cap ring consisting of csl4, rrp4 and rrp40.

Its subcellular location is the cytoplasm. The protein localises to the nucleus. It is found in the nucleolus. Non-catalytic component of the RNA exosome complex which has 3'-&gt;5' exoribonuclease activity and participates in a multitude of cellular RNA processing and degradation events. In the nucleus, the RNA exosome complex is involved in proper maturation of stable RNA species such as rRNA, snRNA and snoRNA, in the elimination of RNA processing by-products and non-coding 'pervasive' transcripts, such as antisense RNA species and cryptic unstable transcripts (CUTs), and of mRNAs with processing defects, thereby limiting or excluding their export to the cytoplasm. In the cytoplasm, the RNA exosome complex is involved in general mRNA turnover and in RNA surveillance pathways, preventing translation of aberrant mRNAs. The catalytic inactive RNA exosome core complex of 9 subunits (Exo-9) is proposed to play a pivotal role in the binding and presentation of RNA for ribonucleolysis, and to serve as a scaffold for the association with catalytic subunits and accessory proteins or complexes. ski6 is part of the hexameric ring of RNase PH domain-containing subunits proposed to form a central channel which threads RNA substrates for degradation. This is Exosome complex component mtr3 (mtr3) from Schizosaccharomyces pombe (strain 972 / ATCC 24843) (Fission yeast).